The sequence spans 288 residues: UDP-3-O-acyl-N-acetylglucosamine deacetylase (288 aa).

Zn(2+)-binding residues include His79, His236, and Asp240. His263 functions as the Proton donor in the catalytic mechanism.

Belongs to the LpxC family. It depends on Zn(2+) as a cofactor.

The enzyme catalyses a UDP-3-O-[(3R)-3-hydroxyacyl]-N-acetyl-alpha-D-glucosamine + H2O = a UDP-3-O-[(3R)-3-hydroxyacyl]-alpha-D-glucosamine + acetate. The protein operates within glycolipid biosynthesis; lipid IV(A) biosynthesis; lipid IV(A) from (3R)-3-hydroxytetradecanoyl-[acyl-carrier-protein] and UDP-N-acetyl-alpha-D-glucosamine: step 2/6. Catalyzes the hydrolysis of UDP-3-O-myristoyl-N-acetylglucosamine to form UDP-3-O-myristoylglucosamine and acetate, the committed step in lipid A biosynthesis. In Rickettsia prowazekii (strain Madrid E), this protein is UDP-3-O-acyl-N-acetylglucosamine deacetylase.